We begin with the raw amino-acid sequence, 476 residues long: F-box protein At5g07670 (476 aa).

The F-box domain occupies 59–111 (PDFTLLLPDLILIRVIQKIPNSQRKNLSLVCKRWFRLHGRLVRSFKVSDWEFL).

This is F-box protein At5g07670 from Arabidopsis thaliana (Mouse-ear cress).